A 600-amino-acid polypeptide reads, in one-letter code: NADH-quinone oxidoreductase subunit C/D (600 aa).

Residues 1 to 190 form an NADH dehydrogenase I subunit C region; the sequence is MIDLMPKKNT…EPFFLNEQKE (190 aa). Residues 214–600 are NADH dehydrogenase I subunit D; that stretch reads EFMFLNLGPN…IDFVMSDVDR (387 aa).

The protein in the N-terminal section; belongs to the complex I 30 kDa subunit family. This sequence in the C-terminal section; belongs to the complex I 49 kDa subunit family. As to quaternary structure, NDH-1 is composed of 13 different subunits. Subunits NuoB, CD, E, F, and G constitute the peripheral sector of the complex.

The protein localises to the cell membrane. It carries out the reaction a quinone + NADH + 5 H(+)(in) = a quinol + NAD(+) + 4 H(+)(out). NDH-1 shuttles electrons from NADH, via FMN and iron-sulfur (Fe-S) centers, to quinones in the respiratory chain. The immediate electron acceptor for the enzyme in this species is believed to be ubiquinone. Couples the redox reaction to proton translocation (for every two electrons transferred, four hydrogen ions are translocated across the cytoplasmic membrane), and thus conserves the redox energy in a proton gradient. The polypeptide is NADH-quinone oxidoreductase subunit C/D (Buchnera aphidicola subsp. Acyrthosiphon pisum (strain 5A)).